We begin with the raw amino-acid sequence, 621 residues long: Kelch-like protein 6 (621 aa).

A BTB domain is found at 72–139; sequence TDVILCVDIQ…TYTSKALITK (68 aa). One can recognise a BACK domain in the interval 174-276; sequence CVGILRLADT…DPWYFVETVE (103 aa). 6 Kelch repeats span residues 320–367, 378–421, 422–468, 470–516, 517–558, and 560–606; these read VFMI…NKKW, EVYI…VLGG, KVYV…SHKK, LYVI…SFRD, RIYV…PCNN, and LYIT…TIRK.

As to expression, found in germinal center B-cells.

Its function is as follows. Involved in B-lymphocyte antigen receptor signaling and germinal center formation. The chain is Kelch-like protein 6 (KLHL6) from Homo sapiens (Human).